A 131-amino-acid polypeptide reads, in one-letter code: Large-conductance mechanosensitive channel (131 aa).

The next 2 helical transmembrane spans lie at 21–41 (VGVI…ADVI) and 76–96 (GMFI…FLMI).

This sequence belongs to the MscL family. In terms of assembly, homopentamer.

Its subcellular location is the cell inner membrane. Its function is as follows. Channel that opens in response to stretch forces in the membrane lipid bilayer. May participate in the regulation of osmotic pressure changes within the cell. The sequence is that of Large-conductance mechanosensitive channel from Histophilus somni (strain 129Pt) (Haemophilus somnus).